Here is a 388-residue protein sequence, read N- to C-terminus: Lipid-A-disaccharide synthase (388 aa).

Belongs to the LpxB family.

The catalysed reaction is a lipid X + a UDP-2-N,3-O-bis[(3R)-3-hydroxyacyl]-alpha-D-glucosamine = a lipid A disaccharide + UDP + H(+). It participates in bacterial outer membrane biogenesis; LPS lipid A biosynthesis. In terms of biological role, condensation of UDP-2,3-diacylglucosamine and 2,3-diacylglucosamine-1-phosphate to form lipid A disaccharide, a precursor of lipid A, a phosphorylated glycolipid that anchors the lipopolysaccharide to the outer membrane of the cell. This Burkholderia thailandensis (strain ATCC 700388 / DSM 13276 / CCUG 48851 / CIP 106301 / E264) protein is Lipid-A-disaccharide synthase.